Consider the following 403-residue polypeptide: MTVEMSVDRSSFDEVMVPCYNPMEFIPVKGFGSRIWDQQGHEYIDFAGGIAVSCLGHCHPVMVQALTTQANKLWHLSNVMTNEPALRLAKKLTQVSFAEKVFFANSGAEANEAALKLARRYAADVYGPEKSEIIAFNQGFHGRTFFTVSVGGQATYSDGFGPKPGDIVHLPYNDLAALQAQISDRTCAVMMEPLQGEGGIVSPSAEFVQAVRELCDKHNALLIFDEVQTGNGRTGDFYAYQGIGVTPDILATAKSLGGGFPIGAMLTTAKIAEHMKVGVHGSTYGGNPLACAVAEAVVDFVAQPEILAGVKQREQWMRAELEKINQKYQLFKEIRGKGLLLGAALNDEWQGRARDILVAAGKQGLMVLVAGASVVRFTPSLIISQQEIEEGMARLDKAIATLM.

Pyridoxal 5'-phosphate-binding positions include 107-108 (GA) and F140. Position 143 (R143) interacts with N(2)-acetyl-L-ornithine. Pyridoxal 5'-phosphate is bound at residue 225–228 (DEVQ). K254 carries the N6-(pyridoxal phosphate)lysine modification. S282 contributes to the N(2)-acetyl-L-ornithine binding site. T283 lines the pyridoxal 5'-phosphate pocket.

This sequence belongs to the class-III pyridoxal-phosphate-dependent aminotransferase family. ArgD subfamily. Homodimer. It depends on pyridoxal 5'-phosphate as a cofactor.

The protein localises to the cytoplasm. The enzyme catalyses N(2)-acetyl-L-ornithine + 2-oxoglutarate = N-acetyl-L-glutamate 5-semialdehyde + L-glutamate. Its pathway is amino-acid biosynthesis; L-arginine biosynthesis; N(2)-acetyl-L-ornithine from L-glutamate: step 4/4. The protein is Acetylornithine aminotransferase of Vibrio cholerae serotype O1 (strain ATCC 39315 / El Tor Inaba N16961).